The primary structure comprises 239 residues: Pimeloyl-[acyl-carrier protein] methyl ester esterase (239 aa).

Substrate contacts are provided by residues Trp-20, 77-78 (SM), and 138-142 (FISLQ). Ser-77 serves as the catalytic Nucleophile. Residues Asp-192 and His-220 contribute to the active site. Residue His-220 coordinates substrate.

This sequence belongs to the AB hydrolase superfamily. Carboxylesterase BioH family. In terms of assembly, monomer.

The protein resides in the cytoplasm. It catalyses the reaction 6-carboxyhexanoyl-[ACP] methyl ester + H2O = 6-carboxyhexanoyl-[ACP] + methanol + H(+). It participates in cofactor biosynthesis; biotin biosynthesis. Its function is as follows. The physiological role of BioH is to remove the methyl group introduced by BioC when the pimeloyl moiety is complete. It allows to synthesize pimeloyl-ACP via the fatty acid synthetic pathway through the hydrolysis of the ester bonds of pimeloyl-ACP esters. The sequence is that of Pimeloyl-[acyl-carrier protein] methyl ester esterase from Legionella pneumophila (strain Paris).